Consider the following 364-residue polypeptide: UDP-N-acetylglucosamine--N-acetylmuramyl-(pentapeptide) pyrophosphoryl-undecaprenol N-acetylglucosamine transferase (364 aa).

Residues Thr10–Gly12, Asn123, Ser198, Ile251, and Gln296 each bind UDP-N-acetyl-alpha-D-glucosamine.

Belongs to the glycosyltransferase 28 family. MurG subfamily.

Its subcellular location is the cell membrane. The catalysed reaction is di-trans,octa-cis-undecaprenyl diphospho-N-acetyl-alpha-D-muramoyl-L-alanyl-D-glutamyl-meso-2,6-diaminopimeloyl-D-alanyl-D-alanine + UDP-N-acetyl-alpha-D-glucosamine = di-trans,octa-cis-undecaprenyl diphospho-[N-acetyl-alpha-D-glucosaminyl-(1-&gt;4)]-N-acetyl-alpha-D-muramoyl-L-alanyl-D-glutamyl-meso-2,6-diaminopimeloyl-D-alanyl-D-alanine + UDP + H(+). The protein operates within cell wall biogenesis; peptidoglycan biosynthesis. Cell wall formation. Catalyzes the transfer of a GlcNAc subunit on undecaprenyl-pyrophosphoryl-MurNAc-pentapeptide (lipid intermediate I) to form undecaprenyl-pyrophosphoryl-MurNAc-(pentapeptide)GlcNAc (lipid intermediate II). The sequence is that of UDP-N-acetylglucosamine--N-acetylmuramyl-(pentapeptide) pyrophosphoryl-undecaprenol N-acetylglucosamine transferase from Exiguobacterium sibiricum (strain DSM 17290 / CCUG 55495 / CIP 109462 / JCM 13490 / 255-15).